Reading from the N-terminus, the 315-residue chain is Methionyl-tRNA formyltransferase (315 aa).

113 to 116 (SILP) serves as a coordination point for (6S)-5,6,7,8-tetrahydrofolate.

This sequence belongs to the Fmt family.

The catalysed reaction is L-methionyl-tRNA(fMet) + (6R)-10-formyltetrahydrofolate = N-formyl-L-methionyl-tRNA(fMet) + (6S)-5,6,7,8-tetrahydrofolate + H(+). In terms of biological role, attaches a formyl group to the free amino group of methionyl-tRNA(fMet). The formyl group appears to play a dual role in the initiator identity of N-formylmethionyl-tRNA by promoting its recognition by IF2 and preventing the misappropriation of this tRNA by the elongation apparatus. The protein is Methionyl-tRNA formyltransferase of Vibrio vulnificus (strain YJ016).